A 209-amino-acid chain; its full sequence is MGGGRGLLGRETLGPGGGCSGEGPLCYWPPPGSPPAPSLRASLPLEPPRCPLRSCSLPRSACLCSRNSAPGSCCRPWASLWSEPPPSPSSQPAPPMYIWTLSCAPAASWAPVTHWTDHPLPPLPSPLLPTRLPDDYIILPTDLRCHSHRHPSHPTDRLLLLVIWTHLGGIWAGHSPWTVIQTAGRPPRDLSPSARPISSPPPETSCVLA.

The tract at residues threonine 182–alanine 209 is disordered. Residue cysteine 206 is modified to Cysteine methyl ester. Cysteine 206 is lipidated: S-farnesyl cysteine. Residues valine 207 to alanine 209 constitute a propeptide, removed in mature form.

Ubiquitous.

Its subcellular location is the cell membrane. The chain is CAAX box protein 1 from Homo sapiens (Human).